The chain runs to 125 residues: Prefoldin subunit beta (125 aa).

The protein belongs to the prefoldin subunit beta family. Heterohexamer of two alpha and four beta subunits.

It localises to the cytoplasm. Molecular chaperone capable of stabilizing a range of proteins. Seems to fulfill an ATP-independent, HSP70-like function in archaeal de novo protein folding. The polypeptide is Prefoldin subunit beta (pfdB) (Sulfurisphaera tokodaii (strain DSM 16993 / JCM 10545 / NBRC 100140 / 7) (Sulfolobus tokodaii)).